Reading from the N-terminus, the 589-residue chain is Transmembrane 9 superfamily member 1 (589 aa).

The signal sequence occupies residues 1 to 24; that stretch reads MPSSSSAAVLVFLLLVSLLTPTFA. The Lumenal segment spans residues 25-222; the sequence is SDSDHKYQAE…YPFFEHQIHW (198 aa). Residues 223–243 traverse the membrane as a helical segment; the sequence is FSIFNSFMMVIFLTGLVSMIL. Residues 244 to 293 are Cytoplasmic-facing; that stretch reads MRTLRNDYAKYAREDDDLESLERDVSEESGWKLVHGDVFRPASSLVLLSA. The helical transmembrane segment at 294–314 threads the bilayer; it reads VVGTGAQLALLVLLVILMAIV. Over 315–321 the chain is Lumenal; the sequence is GTLYVGR. A helical membrane pass occupies residues 322–342; the sequence is GAIVTTFIVCYALTSFVSGYV. Residues 343–364 are Cytoplasmic-facing; that stretch reads SGGMYSRSGGKHWIKCMVLTAS. The helical transmembrane segment at 365-385 threads the bilayer; it reads LFPFLCFGIGFLLNTIAIFYG. Residues 386 to 395 are Lumenal-facing; the sequence is SLAAIPFGTM. The chain crosses the membrane as a helical span at residues 396–416; sequence VVVFVIWGFISFPLALLGTVV. At 417-448 the chain is on the cytoplasmic side; sequence GRNWSGAPNNPCRVKTIPRPIPEKKWYLTPSV. Residues 449-469 traverse the membrane as a helical segment; sequence VSLMGGLLPFGSIFIEMYFVF. Over 470–481 the chain is Lumenal; the sequence is TSFWNYKVYYVY. The chain crosses the membrane as a helical span at residues 482–502; sequence GFMLLVFVILVIVTVCVTIVG. At 503 to 518 the chain is on the cytoplasmic side; that stretch reads TYFLLNAENYHWQWTS. A helical transmembrane segment spans residues 519-539; the sequence is FFSAASTAVYVYLYSIYYYYV. Residues 540–550 lie on the Lumenal side of the membrane; sequence KTKMSGFFQTS. A helical membrane pass occupies residues 551–571; the sequence is FYFGYTMMFCLGLGILCGAVG. Over 572–589 the chain is Cytoplasmic; sequence YLGSNLFVRRIYRNIKCD. The Endoplasmic reticulum export signal signature appears at 578–583; the sequence is FVRRIY. A Golgi retention signal motif is present at residues 587-589; the sequence is KCD.

It belongs to the nonaspanin (TM9SF) (TC 9.A.2) family. Ubiquitous.

Its subcellular location is the endosome membrane. The protein resides in the golgi apparatus membrane. The chain is Transmembrane 9 superfamily member 1 from Arabidopsis thaliana (Mouse-ear cress).